A 249-amino-acid polypeptide reads, in one-letter code: Methyl-coenzyme M reductase subunit gamma (249 aa).

Residues 43 to 62 (RAPGEEYPSVHPPLEELDEP) are disordered. Residue R120 coordinates coenzyme M.

The protein belongs to the methyl-coenzyme M reductase gamma subunit family. As to quaternary structure, MCR is a hexamer of two alpha, two beta, and two gamma chains, forming a dimer of heterotrimers. It depends on coenzyme F430 as a cofactor.

Its subcellular location is the cytoplasm. The enzyme catalyses coenzyme B + methyl-coenzyme M = methane + coenzyme M-coenzyme B heterodisulfide. It participates in one-carbon metabolism; methyl-coenzyme M reduction; methane from methyl-coenzyme M: step 1/1. Functionally, component of the methyl-coenzyme M reductase (MCR) I that catalyzes the reductive cleavage of methyl-coenzyme M (CoM-S-CH3 or 2-(methylthio)ethanesulfonate) using coenzyme B (CoB or 7-mercaptoheptanoylthreonine phosphate) as reductant which results in the production of methane and the mixed heterodisulfide of CoB and CoM (CoM-S-S-CoB). This is the final step in methanogenesis. The polypeptide is Methyl-coenzyme M reductase subunit gamma (mcrG) (Methanothermus fervidus).